A 308-amino-acid chain; its full sequence is Isoflavone reductase-like protein (308 aa).

Residues G11–G17, R36, and K45 each bind NADP(+). The active-site Proton acceptor is K133. An NADP(+)-binding site is contributed by R137.

Belongs to the NmrA-type oxidoreductase family. Isoflavone reductase subfamily. Homodimer.

The protein localises to the cytoplasm. In Olea europaea (Common olive), this protein is Isoflavone reductase-like protein.